We begin with the raw amino-acid sequence, 398 residues long: Trans-2-enoyl-CoA reductase [NADH] (398 aa).

NAD(+) contacts are provided by residues 47–52, 74–75, 111–112, and 139–140; these read GASSGF, FE, DA, and LA. Tyrosine 225 is a substrate binding site. Catalysis depends on tyrosine 235, which acts as the Proton donor. NAD(+) contacts are provided by residues lysine 244 and 274 to 276; that span reads IVT.

Belongs to the TER reductase family. Monomer.

The enzyme catalyses a 2,3-saturated acyl-CoA + NAD(+) = a (2E)-enoyl-CoA + NADH + H(+). It functions in the pathway lipid metabolism; fatty acid biosynthesis. Involved in the fatty acid synthesis (FAS II). Catalyzes the reduction of a carbon-carbon double bond in an enoyl moiety that is covalently linked to a coenzyme A (CoA). The protein is Trans-2-enoyl-CoA reductase [NADH] of Clostridium beijerinckii (strain ATCC 51743 / NCIMB 8052) (Clostridium acetobutylicum).